Reading from the N-terminus, the 202-residue chain is Translation initiation factor IF-3 (202 aa).

This sequence belongs to the IF-3 family. In terms of assembly, monomer.

It localises to the cytoplasm. In terms of biological role, IF-3 binds to the 30S ribosomal subunit and shifts the equilibrium between 70S ribosomes and their 50S and 30S subunits in favor of the free subunits, thus enhancing the availability of 30S subunits on which protein synthesis initiation begins. The protein is Translation initiation factor IF-3 of Prochlorococcus marinus (strain NATL2A).